A 327-amino-acid chain; its full sequence is Methionine import ATP-binding protein MetN (327 aa).

An ABC transporter domain is found at 3 to 239 (VELKNIEKIY…PKHAVTKELI (237 aa)). An ATP-binding site is contributed by 36–43 (GYSGAGKS).

The protein belongs to the ABC transporter superfamily. Methionine importer (TC 3.A.1.24) family. The complex is composed of two ATP-binding proteins (MetN), two transmembrane proteins (MetI) and a solute-binding protein (MetQ).

It localises to the cell inner membrane. It catalyses the reaction L-methionine(out) + ATP + H2O = L-methionine(in) + ADP + phosphate + H(+). The catalysed reaction is D-methionine(out) + ATP + H2O = D-methionine(in) + ADP + phosphate + H(+). Its function is as follows. Part of the ABC transporter complex MetNIQ involved in methionine import. Responsible for energy coupling to the transport system. This chain is Methionine import ATP-binding protein MetN, found in Helicobacter acinonychis (strain Sheeba).